The sequence spans 87 residues: Small ribosomal subunit protein bS20 (87 aa).

Residues 1–26 (MANTKSALKRIRQTATRTARNRAVTS) form a disordered region. Residues 13-23 (QTATRTARNRA) show a composition bias toward low complexity.

It belongs to the bacterial ribosomal protein bS20 family.

In terms of biological role, binds directly to 16S ribosomal RNA. The sequence is that of Small ribosomal subunit protein bS20 from Akkermansia muciniphila (strain ATCC BAA-835 / DSM 22959 / JCM 33894 / BCRC 81048 / CCUG 64013 / CIP 107961 / Muc).